Here is a 408-residue protein sequence, read N- to C-terminus: ATP phosphoribosyltransferase regulatory subunit (408 aa).

It belongs to the class-II aminoacyl-tRNA synthetase family. HisZ subfamily. In terms of assembly, heteromultimer composed of HisG and HisZ subunits.

Its subcellular location is the cytoplasm. Its pathway is amino-acid biosynthesis; L-histidine biosynthesis; L-histidine from 5-phospho-alpha-D-ribose 1-diphosphate: step 1/9. Required for the first step of histidine biosynthesis. May allow the feedback regulation of ATP phosphoribosyltransferase activity by histidine. The sequence is that of ATP phosphoribosyltransferase regulatory subunit from Thermosynechococcus vestitus (strain NIES-2133 / IAM M-273 / BP-1).